The sequence spans 205 residues: Thymidylate kinase (205 aa).

11-18 (GVEGAGKS) serves as a coordination point for ATP.

This sequence belongs to the thymidylate kinase family.

It carries out the reaction dTMP + ATP = dTDP + ADP. Functionally, phosphorylation of dTMP to form dTDP in both de novo and salvage pathways of dTTP synthesis. This chain is Thymidylate kinase, found in Vesicomyosocius okutanii subsp. Calyptogena okutanii (strain HA).